We begin with the raw amino-acid sequence, 237 residues long: CDP-diacylglycerol--serine O-phosphatidyltransferase (237 aa).

8 helical membrane-spanning segments follow: residues 3-23, 25-45, 73-93, 95-115, 124-144, 150-170, 184-204, and 207-227; these read INPLYLFPNLFTASSIFLGMM, IFYASSYQFVMACWLVVASLI, VIAFGVAPSLIAYFYVGYNFG, IGMAVSALFVIFGAIRLARFN, YSFIGIPIPAAAVLVVLCVLL, FLEGNTEKLFLSFIVLLGVLM, WNLKLFILVLIFLSLVFVRPL, and LSVFMGLYLIYGIIRWLFLMV.

The protein belongs to the CDP-alcohol phosphatidyltransferase class-I family.

The protein resides in the cell membrane. The catalysed reaction is a CDP-1,2-diacyl-sn-glycerol + L-serine = a 1,2-diacyl-sn-glycero-3-phospho-L-serine + CMP + H(+). The polypeptide is CDP-diacylglycerol--serine O-phosphatidyltransferase (pssA) (Helicobacter pylori (strain ATCC 700392 / 26695) (Campylobacter pylori)).